Reading from the N-terminus, the 339-residue chain is Cathepsin L (339 aa).

The N-terminal stretch at 1-17 (MRTVLVALLALVALTQA) is a signal peptide. The propeptide at 18 to 121 (ISPLDLIKEE…ATYIPPAHVT (104 aa)) is activation peptide. A glycan (N-linked (GlcNAc...) asparagine) is linked at Asn-96. Disulfide bonds link Cys-143/Cys-186, Cys-177/Cys-219, and Cys-278/Cys-328. The active site involves Cys-146. His-285 is a catalytic residue. Positions 295-298 (DESG) are excised as a propeptide. Residue Asn-306 is part of the active site.

Belongs to the peptidase C1 family. Dimer of a heavy and a light chain linked by disulfide bonds.

It is found in the lysosome. It catalyses the reaction Specificity close to that of papain. As compared to cathepsin B, cathepsin L exhibits higher activity toward protein substrates, but has little activity on Z-Arg-Arg-NHMec, and no peptidyl-dipeptidase activity.. Important for the overall degradation of proteins in lysosomes. Required for differentiation of imaginal disks. The protein is Cathepsin L of Sarcophaga peregrina (Flesh fly).